We begin with the raw amino-acid sequence, 770 residues long: POU domain, class 2, transcription factor 1 (770 aa).

Residues 1–26 are compositionally biased toward polar residues; sequence MNNPSETNKSSMESEDASTGTQTNGL. Disordered stretches follow at residues 1–33, 68–97, 262–285, and 357–385; these read MNNP…KQPV, LNVQ…VQSA, VQTL…EPSD, and LSSD…RRKK. Over residues 80-97 the composition is skewed to low complexity; that stretch reads DSQQSSQPSSQPPSVQSA. Over residues 262 to 272 the composition is skewed to polar residues; sequence VQTLPQSQSTP. Residues T271 and T277 each carry the phosphothreonine modification. One can recognise a POU-specific domain in the interval 281–355; the sequence is EEPSDLEELE…LLEKWLNDAE (75 aa). At S284 the chain carries Phosphoserine. Residues 357–372 show a composition bias toward low complexity; it reads LSSDSTASSPSALNSP. A DNA-binding region (homeobox) is located at residues 382–441; sequence RRKKRTSIETNIRVALEKSFMENQKPTSEDITLIAEQLNMEKEVIRVWFCNRRQKEKRIN. A phosphoserine mark is found at S388 and S451. Residues 519–580 show a composition bias toward low complexity; that stretch reads TTTAGTTDST…TNTTQTTSTP (62 aa). The tract at residues 519–589 is disordered; that stretch reads TTTAGTTDST…PLPSPLGASQ (71 aa).

Belongs to the POU transcription factor family. Class-2 subfamily. In terms of assembly, interacts with POU2AF1; the interaction increases POU2F1 transactivation activity. Interacts with NR3C1, AR, PGR and HCFC1. Phosphorylated by PRKDC. As to expression, ubiquitously expressed. However, isoforms 4 and 5 are only expressed in lymphocytes.

It localises to the nucleus. Functionally, transcription factor that binds to the octamer motif (5'-ATTTGCAT-3') and activates the promoters of the genes for some small nuclear RNAs (snRNA) and of genes such as those for histone H2B and immunoglobulins. Modulates transcription transactivation by NR3C1, AR and PGR. The polypeptide is POU domain, class 2, transcription factor 1 (Pou2f1) (Mus musculus (Mouse)).